Consider the following 485-residue polypeptide: Glutamyl-tRNA(Gln) amidotransferase subunit A (485 aa).

Residues K78 and S153 each act as charge relay system in the active site. Catalysis depends on S177, which acts as the Acyl-ester intermediate.

Belongs to the amidase family. GatA subfamily. Heterotrimer of A, B and C subunits.

It carries out the reaction L-glutamyl-tRNA(Gln) + L-glutamine + ATP + H2O = L-glutaminyl-tRNA(Gln) + L-glutamate + ADP + phosphate + H(+). Allows the formation of correctly charged Gln-tRNA(Gln) through the transamidation of misacylated Glu-tRNA(Gln) in organisms which lack glutaminyl-tRNA synthetase. The reaction takes place in the presence of glutamine and ATP through an activated gamma-phospho-Glu-tRNA(Gln). This chain is Glutamyl-tRNA(Gln) amidotransferase subunit A, found in Pelobacter propionicus (strain DSM 2379 / NBRC 103807 / OttBd1).